A 388-amino-acid polypeptide reads, in one-letter code: Na(+)/H(+) antiporter NhaA (388 aa).

The Cytoplasmic segment spans residues 1-11 (MKHLHRFFSSD). The helical transmembrane segment at 12-31 (ASGGIILIIAAILAMMMANS) threads the bilayer. Residues 32 to 58 (GATSGWYHDFLETPVQLRVGSLEINKN) are Periplasmic-facing. Residues 59–80 (MLLWINDALMAVFFLLVGLEVK) form a helical membrane-spanning segment. Over 81–96 (RELMQGSLASLRQAAF) the chain is Cytoplasmic. A helical membrane pass occupies residues 97-116 (PVIAAIGGMIVPALLYLAFN). Over 117–122 (YADPIT) the chain is Periplasmic. A helical transmembrane segment spans residues 123 to 130 (REGWAIPA). The Cytoplasmic portion of the chain corresponds to 131-154 (ATDIAFALGVLALLGSRVPLALKI). A helical membrane pass occupies residues 155 to 176 (FLMALAIIDDLGAIIIIALFYT). The Periplasmic segment spans residues 177 to 180 (NDLS). Residues 181–200 (MASLGVAAVAIAVLAVLNLC) traverse the membrane as a helical segment. Topologically, residues 201–204 (GVRR) are cytoplasmic. Residues 205–222 (TGVYILVGVVLWTAVLKS) traverse the membrane as a helical segment. G223 is a topological domain (periplasmic). A helical membrane pass occupies residues 224 to 236 (VHATLAGVIVGFF). Topologically, residues 237 to 253 (IPLKEKHGRSPAKRLEH) are cytoplasmic. The chain crosses the membrane as a helical span at residues 254–272 (VLHPWVAYLILPLFAFANA). At 273–286 (GVSLQGVTLDGLTS) the chain is on the periplasmic side. The chain crosses the membrane as a helical span at residues 287-310 (ILPLGIIAGLLIGKPLGISLFCWL). Residues 311-339 (ALRLKLAHLPEGTTYQQIMAVGILCGIGF) are Cytoplasmic-facing. The chain crosses the membrane as a helical span at residues 340-350 (TMSIFIASLAF). Residues 351-357 (GSVDPEL) lie on the Periplasmic side of the membrane. Residues 358–380 (INWAKLGILVGSISSAVIGYSWL) form a helical membrane-spanning segment. Topologically, residues 381–388 (RVRLRPSV) are cytoplasmic.

Belongs to the NhaA Na(+)/H(+) (TC 2.A.33) antiporter family.

It localises to the cell inner membrane. The enzyme catalyses Na(+)(in) + 2 H(+)(out) = Na(+)(out) + 2 H(+)(in). In terms of biological role, na(+)/H(+) antiporter that extrudes sodium in exchange for external protons. The sequence is that of Na(+)/H(+) antiporter NhaA from Shigella boydii serotype 4 (strain Sb227).